A 225-amino-acid chain; its full sequence is Cytidylate kinase (225 aa).

Residue 10 to 18 (GPASSGKST) coordinates ATP.

It belongs to the cytidylate kinase family. Type 1 subfamily.

Its subcellular location is the cytoplasm. It catalyses the reaction CMP + ATP = CDP + ADP. The catalysed reaction is dCMP + ATP = dCDP + ADP. This Streptococcus suis (strain 98HAH33) protein is Cytidylate kinase.